A 192-amino-acid polypeptide reads, in one-letter code: Peptidyl-tRNA hydrolase (192 aa).

Tyrosine 18 contributes to the tRNA binding site. Histidine 23 acts as the Proton acceptor in catalysis. TRNA-binding residues include phenylalanine 69, asparagine 71, and asparagine 117.

It belongs to the PTH family. Monomer.

The protein localises to the cytoplasm. The catalysed reaction is an N-acyl-L-alpha-aminoacyl-tRNA + H2O = an N-acyl-L-amino acid + a tRNA + H(+). Hydrolyzes ribosome-free peptidyl-tRNAs (with 1 or more amino acids incorporated), which drop off the ribosome during protein synthesis, or as a result of ribosome stalling. Functionally, catalyzes the release of premature peptidyl moieties from peptidyl-tRNA molecules trapped in stalled 50S ribosomal subunits, and thus maintains levels of free tRNAs and 50S ribosomes. This is Peptidyl-tRNA hydrolase from Neisseria meningitidis serogroup C (strain 053442).